The following is a 344-amino-acid chain: UDP-3-O-acylglucosamine N-acyltransferase (344 aa).

The Proton acceptor role is filled by His-250.

The protein belongs to the transferase hexapeptide repeat family. LpxD subfamily. In terms of assembly, homotrimer.

The catalysed reaction is a UDP-3-O-[(3R)-3-hydroxyacyl]-alpha-D-glucosamine + a (3R)-hydroxyacyl-[ACP] = a UDP-2-N,3-O-bis[(3R)-3-hydroxyacyl]-alpha-D-glucosamine + holo-[ACP] + H(+). Its pathway is bacterial outer membrane biogenesis; LPS lipid A biosynthesis. Functionally, catalyzes the N-acylation of UDP-3-O-acylglucosamine using 3-hydroxyacyl-ACP as the acyl donor. Is involved in the biosynthesis of lipid A, a phosphorylated glycolipid that anchors the lipopolysaccharide to the outer membrane of the cell. The sequence is that of UDP-3-O-acylglucosamine N-acyltransferase from Maricaulis maris (strain MCS10) (Caulobacter maris).